The primary structure comprises 106 residues: Transcription initiation factor IIA subunit 2 (106 aa).

Belongs to the TFIIA subunit 2 family. TFIIA is a heterodimer of the large unprocessed subunit 1 and a small subunit gamma. It was originally believed to be a heterotrimer of an alpha (p30), a beta (p20) and a gamma (p14) subunit. Forms a complex with Moonshiner/CG12721 and Trf2. In terms of tissue distribution, ubiquitous.

The protein resides in the nucleus. In terms of biological role, TFIIA is a component of the transcription machinery of RNA polymerase II and plays an important role in transcriptional activation. TFIIA in a complex with TBP mediates transcriptional activity. Part of a rhi-dependent transcription machinery that enables the generation of piRNA precursors from heterochromatin while maintaining the suppression of transposon-encoded promoters and enhancers. Forms a complex with Moonshiner/CG12721 and Trf2 which recruit transcriptional machinery to heterochromatin to initiate the bidirectional transcription of piRNA clusters, by interacting with the RDC (rhi, del and cuff) complex that binds to repressive H3K9me3 marks in the chromatin. This mechanism allows transcription to occur in piRNA clusters despite the lack of proper promoter elements and in the presence of the repressive H3K9me3 mark. The polypeptide is Transcription initiation factor IIA subunit 2 (TfIIA-S) (Drosophila melanogaster (Fruit fly)).